Consider the following 224-residue polypeptide: Response regulator protein GraR (224 aa).

Positions 2 to 115 (DILLVEDDMT…VLIAKLQAIY (114 aa)) constitute a Response regulatory domain. Aspartate 51 is modified (4-aspartylphosphate). The ompR/PhoB-type DNA-binding region spans 126-224 (KRVLSWQDAI…KIGKGYMAHG (99 aa)).

Phosphorylated by GraS.

The protein localises to the cytoplasm. Its function is as follows. Member of the two-component regulatory system GraR/GraS involved in resistance against cationic antimicrobial peptides (CAMPs). The protein is Response regulator protein GraR (graR) of Staphylococcus saprophyticus subsp. saprophyticus (strain ATCC 15305 / DSM 20229 / NCIMB 8711 / NCTC 7292 / S-41).